A 645-amino-acid polypeptide reads, in one-letter code: Cilia- and flagella-associated protein 221 homolog (645 aa).

A disordered region spans residues 381 to 408; it reads GGAVHQPSAPVGSSSSGGGGGSDPAFKP. The segment at 428–435 is interaction with calmodulin; it reads THQRLQRR.

This sequence belongs to the PCDP1 family. In terms of assembly, interacts with calmodulin; calcium-dependent. Part of the PDCP1 complex composed of CFAP46, CFAP54, CFAP74 and CFAP221; the PDCP1 complex binds calmodulin.

It is found in the cytoplasm. It localises to the cytoskeleton. The protein resides in the cilium axoneme. In terms of biological role, may play a role in cilium morphogenesis. This Chlamydomonas reinhardtii (Chlamydomonas smithii) protein is Cilia- and flagella-associated protein 221 homolog.